The primary structure comprises 48 residues: Delta-stichotoxin-Hcr1b (48 aa).

Disulfide bonds link cysteine 3–cysteine 43, cysteine 5–cysteine 33, and cysteine 26–cysteine 44.

Belongs to the sea anemone sodium channel inhibitory toxin family. Type II subfamily.

Its subcellular location is the secreted. The protein localises to the nematocyst. Functionally, binds to site 3 of voltage-gated sodium channels and inhibits the inactivation process. The polypeptide is Delta-stichotoxin-Hcr1b (Radianthus crispa (Leathery sea anemone)).